A 470-amino-acid polypeptide reads, in one-letter code: Putative gustatory receptor 28b (470 aa).

At 1–76 the chain is on the cytoplasmic side; sequence MDIEMAKEPV…KTGKKAIKKT (76 aa). The helical transmembrane segment at 77 to 97 threads the bilayer; that stretch reads IFGYINGIMHIAMFVFAYSLT. At 98 to 119 the chain is on the extracellular side; it reads IYNNCESVASYFFRSRITYFGD. Residues 120–140 form a helical membrane-spanning segment; sequence LMQIVSGFIGVTVIYLTAFVP. At 141–175 the chain is on the cytoplasmic side; sequence NHRLERCLQKFHTMDVQLQTVGVKIMYSKVLRFSY. The helical transmembrane segment at 176–196 threads the bilayer; the sequence is MVLISMFLVNVLFTGGTFSVL. Residues 197 to 204 lie on the Extracellular side of the membrane; it reads YSSEVAPT. The helical transmembrane segment at 205–225 threads the bilayer; sequence MALHFTFLIQHTVIAIAIALF. At 226–309 the chain is on the cytoplasmic side; sequence SCFTYLVEMR…ATANKYFTYQ (84 aa). Residues 310 to 330 form a helical membrane-spanning segment; that stretch reads LLTIISIAFLIIVFDAYYVLE. The Extracellular portion of the chain corresponds to 331 to 346; the sequence is TLLGKSKRESKFKTVE. A helical transmembrane segment spans residues 347–367; sequence FVTFFSCQMILYLIAIISIVE. Topologically, residues 368 to 423 are cytoplasmic; that stretch reads GSNRAIKKSEKTGGIVHSLLNKTKSAEVKEKLQQFSMQLMHLKINFTAAGLFNIDR. The chain crosses the membrane as a helical span at residues 424-444; sequence TLYFTISGALTTYLIILLQFT. The Extracellular segment spans residues 445 to 470; the sequence is SNSPNNGYGNGSSCCETFNNMTNHTL. N-linked (GlcNAc...) asparagine glycans are attached at residues asparagine 454, asparagine 464, and asparagine 467.

Belongs to the insect chemoreceptor superfamily. Gustatory receptor (GR) family. Gr66a subfamily. As to expression, isoforms A and E have taste neuron-specific expression restricted to the labial palps, the internal taste organs in the pharynx, and the legs. In addition to expression in a large number of taste neurons, isoform A is also expressed in a few nonchemosensory neurons, including the campaniform sensilla of the wing, leg stretch receptors, and multiple dendritic neurons in the abdomen. Isoform B is the only receptor not expressed in gustatory receptor neurons in the labellum. We observe expression of this receptor in a single large cell at the base of each maxillary palp, in campaniform sensilla of the wing, and multiple dendritic neurons in the abdomen. Isoform C is expressed by many gustatory receptor neurons in the labial palps, the pharyngeal taste clusters, and taste neurons in the legs. In addition, isoform C expressed in a single cell at the base of the maxillary palps, neurons in the Johnston's organ (JO), campaniform sensilla of the wing, stretch receptors and the femoral chordotonal organ of the legs, and multiple dendritic neurons in the abdomen. Isoform D is expressed in a small number of gustatory receptor neurons in the labial palps, the ventral cibarial sense organ (VCSO), and legs. Atypical expression is observed in three neurons in the arista, campaniform sensilla of the wing, stretch and femoral chordotonal organ receptors in the legs, and multiple dendritic neurons in the abdomen. In larvae, Isoform A is expressed in neurons of the terminal external chemosensory organ and the dorsal external chemosensory organ; and isoform E is expressed in neurons of the terminal external chemosensory organ.

The protein resides in the cell membrane. Functionally, probable gustatory receptor which mediates acceptance or avoidance behavior, depending on its substrates. Atypical expression also suggests nongustatory roles in the nervous system and tissues involved in proprioception, hygroreception, and other sensory modalities. It is also possible that it has chemosensory roles in the detection of internal ligands. The sequence is that of Putative gustatory receptor 28b (Gr28b) from Drosophila melanogaster (Fruit fly).